The primary structure comprises 327 residues: Lactosylceramide 4-alpha-galactosyltransferase (327 aa).

A DXD motif motif is present at residues 166–168 (DTD).

The protein belongs to the glycosyltransferase 32 family.

It localises to the golgi apparatus membrane. The catalysed reaction is a beta-D-Gal-(1-&gt;4)-beta-D-Glc-(1&lt;-&gt;1)-Cer(d18:1(4E)) + UDP-alpha-D-galactose = a globoside Gb3Cer (d18:1(4E)) + UDP + H(+). It catalyses the reaction a beta-D-Gal-(1&lt;-&gt;1')-ceramide + UDP-alpha-D-galactose = alpha-D-Gal-(1-&gt;4)-beta-D-Gal-(1&lt;-&gt;1')-Cer + UDP + H(+). It functions in the pathway glycolipid biosynthesis. Its function is as follows. Catalyzes the transfer of galactose from UDP-alpha-D-galactose to lactosylceramide/beta-D-galactosyl-(1-&gt;4)-beta-D-glucosyl-(1&lt;-&gt;1)-ceramide(d18:1(4E)) to produce globotriaosylceramide/globoside Gb3Cer (d18:1(4E)). Also able to transfer galactose to galactosylceramide/beta-D-Gal-(1&lt;-&gt;1')-Cer. Globoside Gb3Cer is a glycosphingolipid of the globo serie, one of the major types of neutral root structures of glycosphingolipids, that constitute a significant portion of mammalian cell membranes. The chain is Lactosylceramide 4-alpha-galactosyltransferase (A4GALT) from Gorilla gorilla gorilla (Western lowland gorilla).